A 186-amino-acid polypeptide reads, in one-letter code: Ribosome-recycling factor (186 aa).

This sequence belongs to the RRF family.

Its subcellular location is the cytoplasm. In terms of biological role, responsible for the release of ribosomes from messenger RNA at the termination of protein biosynthesis. May increase the efficiency of translation by recycling ribosomes from one round of translation to another. The protein is Ribosome-recycling factor of Polaromonas naphthalenivorans (strain CJ2).